A 1191-amino-acid chain; its full sequence is Homeodomain-interacting protein kinase 3 (1191 aa).

K27 participates in a covalent cross-link: Glycyl lysine isopeptide (Lys-Gly) (interchain with G-Cter in SUMO2). The Protein kinase domain occupies 197-525 (YEVLDFLGRG…PIETLNHPFV (329 aa)). ATP is bound by residues 203–211 (LGRGTFGQV) and K226. D322 serves as the catalytic Proton acceptor. Y359 carries the post-translational modification Phosphotyrosine. Residues 766 to 920 (QNRSNSLQNT…NSMSDDEQES (155 aa)) form an interaction with AR region. Residues 774–867 (NTNVPHSAFI…SPRPSLRECK (94 aa)) form an interaction with FAS region. The segment at 801–828 (TQDNHTSEGEARTCHEASVRQDSSVSDK) is disordered. Over residues 802 to 828 (QDNHTSEGEARTCHEASVRQDSSVSDK) the composition is skewed to basic and acidic residues. Residues 846–856 (ITISSDTDDEE) are interaction with UBL1. The span at 888–905 (SSPDSTLSTSSSGQSSPS) shows a compositional bias: low complexity. 2 disordered regions span residues 888-960 (SSPD…TCAG) and 993-1022 (TCQP…KPTS). Over residues 1008 to 1022 (NQPSASAARQQKPTS) the composition is skewed to polar residues.

It belongs to the protein kinase superfamily. CMGC Ser/Thr protein kinase family. HIPK subfamily. As to quaternary structure, interacts with Nkx1-2. Interacts with FAS and DAXX. Probably part of a complex consisting of HIPK3, FAS and FADD. Interacts with UBL1/SUMO-1. Interacts with and stabilizes ligand-bound androgen receptor (AR). Post-translationally, autophosphorylated. Autophosphorylation is not required for catalytic activity. In terms of processing, may be sumoylated.

It localises to the nucleus. It catalyses the reaction L-seryl-[protein] + ATP = O-phospho-L-seryl-[protein] + ADP + H(+). The enzyme catalyses L-threonyl-[protein] + ATP = O-phospho-L-threonyl-[protein] + ADP + H(+). Its function is as follows. Seems to negatively regulate apoptosis by promoting FADD phosphorylation. Enhances androgen receptor-mediated transcription. May act as a transcriptional corepressor for NK homeodomain transcription factors. The chain is Homeodomain-interacting protein kinase 3 (Hipk3) from Rattus norvegicus (Rat).